A 318-amino-acid chain; its full sequence is Probable carboxylesterase 1 (318 aa).

Met-1 is modified (N-acetylmethionine). Residues 79–81 (HGG) carry the Involved in the stabilization of the negatively charged intermediate by the formation of the oxyanion hole motif. Catalysis depends on residues Ser-163, Asp-258, and His-290.

Belongs to the 'GDXG' lipolytic enzyme family. As to expression, expressed in roots, stems, flowers and siliques.

It catalyses the reaction a carboxylic ester + H2O = an alcohol + a carboxylate + H(+). Its function is as follows. Carboxylesterase acting on esters with varying acyl chain length. This Arabidopsis thaliana (Mouse-ear cress) protein is Probable carboxylesterase 1 (CXE1).